The following is a 309-amino-acid chain: Protease HtpX homolog (309 aa).

Transmembrane regions (helical) follow at residues Thr-7–Gly-27 and Gln-29–Ser-49. His-131 contributes to the Zn(2+) binding site. Glu-132 is an active-site residue. Residue His-135 participates in Zn(2+) binding. 2 helical membrane-spanning segments follow: residues Ile-141 to Ala-161 and Ile-182 to Ile-202. Zn(2+) is bound at residue Glu-207. Residues Arg-278–Arg-309 form a disordered region.

The protein belongs to the peptidase M48B family. The cofactor is Zn(2+).

It localises to the cell inner membrane. In Desulforapulum autotrophicum (strain ATCC 43914 / DSM 3382 / VKM B-1955 / HRM2) (Desulfobacterium autotrophicum), this protein is Protease HtpX homolog.